A 165-amino-acid polypeptide reads, in one-letter code: Transcription elongation factor GreA (165 aa).

Residues alanine 55–lysine 78 adopt a coiled-coil conformation.

This sequence belongs to the GreA/GreB family.

In terms of biological role, necessary for efficient RNA polymerase transcription elongation past template-encoded arresting sites. The arresting sites in DNA have the property of trapping a certain fraction of elongating RNA polymerases that pass through, resulting in locked ternary complexes. Cleavage of the nascent transcript by cleavage factors such as GreA or GreB allows the resumption of elongation from the new 3'terminus. GreA releases sequences of 2 to 3 nucleotides. This chain is Transcription elongation factor GreA, found in Streptomyces avermitilis (strain ATCC 31267 / DSM 46492 / JCM 5070 / NBRC 14893 / NCIMB 12804 / NRRL 8165 / MA-4680).